Here is a 144-residue protein sequence, read N- to C-terminus: Deoxyuridine 5'-triphosphate nucleotidohydrolase (144 aa).

Residues 63 to 65 (RSG), asparagine 76, and 80 to 82 (TID) contribute to the substrate site.

It belongs to the dUTPase family. The cofactor is Mg(2+).

The catalysed reaction is dUTP + H2O = dUMP + diphosphate + H(+). It participates in pyrimidine metabolism; dUMP biosynthesis; dUMP from dCTP (dUTP route): step 2/2. In terms of biological role, this enzyme is involved in nucleotide metabolism: it produces dUMP, the immediate precursor of thymidine nucleotides and it decreases the intracellular concentration of dUTP so that uracil cannot be incorporated into DNA. The sequence is that of Deoxyuridine 5'-triphosphate nucleotidohydrolase from Alkaliphilus metalliredigens (strain QYMF).